A 333-amino-acid chain; its full sequence is Cytochrome f (333 aa).

The signal sequence occupies residues 1-44 (MRNACTRARLTRTARAMVKTLFIAIASVTFFFTSDLALPQSAAA). The heme site is built by tyrosine 45, cysteine 66, cysteine 69, and histidine 70. Residues 299–318 (VGWLIAFVALVMLAQVMLVL) form a helical membrane-spanning segment.

This sequence belongs to the cytochrome f family. In terms of assembly, the 4 large subunits of the cytochrome b6-f complex are cytochrome b6, subunit IV (17 kDa polypeptide, PetD), cytochrome f and the Rieske protein, while the 4 small subunits are PetG, PetL, PetM and PetN. The complex functions as a dimer. Requires heme as cofactor.

Its subcellular location is the cellular thylakoid membrane. Component of the cytochrome b6-f complex, which mediates electron transfer between photosystem II (PSII) and photosystem I (PSI), cyclic electron flow around PSI, and state transitions. This Nostoc sp. (strain PCC 7120 / SAG 25.82 / UTEX 2576) protein is Cytochrome f.